Reading from the N-terminus, the 317-residue chain is Carbamate kinase (317 aa).

It belongs to the carbamate kinase family. Homodimer.

It carries out the reaction hydrogencarbonate + NH4(+) + ATP = carbamoyl phosphate + ADP + H2O + H(+). It functions in the pathway metabolic intermediate metabolism; carbamoyl phosphate degradation; CO(2) and NH(3) from carbamoyl phosphate: step 1/1. This chain is Carbamate kinase (CBK), found in Giardia intestinalis (Giardia lamblia).